We begin with the raw amino-acid sequence, 185 residues long: Photosystem I assembly protein Ycf4 (185 aa).

2 helical membrane-spanning segments follow: residues 21–43 (NFFW…ASSY) and 63–85 (GVVM…CTIL).

The protein belongs to the Ycf4 family.

The protein localises to the plastid. Its subcellular location is the chloroplast thylakoid membrane. Its function is as follows. Seems to be required for the assembly of the photosystem I complex. In Saccharum hybrid (Sugarcane), this protein is Photosystem I assembly protein Ycf4.